The sequence spans 208 residues: PITH domain-containing protein ZK353.9 (208 aa).

The region spanning 17–189 (EVPGDDVYRY…RIAIATYESR (173 aa)) is the PITH domain.

This sequence belongs to the PITHD1 family.

This is PITH domain-containing protein ZK353.9 from Caenorhabditis elegans.